A 101-amino-acid polypeptide reads, in one-letter code: ATP synthase subunit c (101 aa).

The next 2 helical transmembrane spans lie at 31–51 (AFAY…GAGQ) and 81–101 (AISE…IFVG).

Belongs to the ATPase C chain family. As to quaternary structure, F-type ATPases have 2 components, F(1) - the catalytic core - and F(0) - the membrane proton channel. F(1) has five subunits: alpha(3), beta(3), gamma(1), delta(1), epsilon(1). F(0) has three main subunits: a(1), b(2) and c(10-14). The alpha and beta chains form an alternating ring which encloses part of the gamma chain. F(1) is attached to F(0) by a central stalk formed by the gamma and epsilon chains, while a peripheral stalk is formed by the delta and b chains.

The protein resides in the cell membrane. F(1)F(0) ATP synthase produces ATP from ADP in the presence of a proton or sodium gradient. F-type ATPases consist of two structural domains, F(1) containing the extramembraneous catalytic core and F(0) containing the membrane proton channel, linked together by a central stalk and a peripheral stalk. During catalysis, ATP synthesis in the catalytic domain of F(1) is coupled via a rotary mechanism of the central stalk subunits to proton translocation. Functionally, key component of the F(0) channel; it plays a direct role in translocation across the membrane. A homomeric c-ring of between 10-14 subunits forms the central stalk rotor element with the F(1) delta and epsilon subunits. This is ATP synthase subunit c from Mesomycoplasma hyopneumoniae (strain 232) (Mycoplasma hyopneumoniae).